We begin with the raw amino-acid sequence, 649 residues long: Quinol oxidase subunit 1 (649 aa).

At 1 to 15 the chain is on the extracellular side; sequence MKFKWDEFFVTGDPL. The helical transmembrane segment at 16–34 threads the bilayer; the sequence is ILGAQVSIALSTIAIIFVL. The Cytoplasmic segment spans residues 35-56; sequence TYFKKWKWLWSEWITTVDHKKL. A helical transmembrane segment spans residues 57 to 75; the sequence is GIMYIISAVIMLFRGGVDG. At 76 to 97 the chain is on the extracellular side; sequence LMMRAQLALPNNSFLDSNHYNE. The chain crosses the membrane as a helical span at residues 98 to 117; it reads IFTTHGTIMIIFMAMPFLIG. H102 contributes to the Fe(II)-heme a binding site. Topologically, residues 118 to 139 are cytoplasmic; that stretch reads LINVVVPLQIGARDVAFPYLNN. The helical transmembrane segment at 140-157 threads the bilayer; it reads LSFWTFFVGAMLFNISFV. The Extracellular portion of the chain corresponds to 158–190; the sequence is IGGSPNAGWTSYMPLASNDMSPGPGENYYLLGL. A helical transmembrane segment spans residues 191–209; sequence QIAGIGTLMTGINFMVTIL. Over 210-227 the chain is Cytoplasmic; it reads KMRTKGMTLMRMPMFTWT. Residues 228-246 traverse the membrane as a helical segment; the sequence is TLITMVIIVFAFPVLTVAL. The Extracellular portion of the chain corresponds to 247-272; it reads ALLSFDRLFGAHFFTLEAGGMPMLWA. The chain crosses the membrane as a helical span at residues 273–292; that stretch reads NLFWIWGHPEVYIVILPAFG. Residues H280 and Y284 each coordinate Cu cation. The segment at residues 280–284 is a cross-link (1'-histidyl-3'-tyrosine (His-Tyr)); the sequence is HPEVY. Residues 293 to 315 lie on the Cytoplasmic side of the membrane; sequence IFSEIISSFARKQLFGYKAMVGS. The chain crosses the membrane as a helical span at residues 316-335; sequence IIAISVLSFLVWTHHFFTMG. Cu cation is bound by residues H329 and H330. Residues 336–343 are Extracellular-facing; the sequence is NSASVNSF. The chain crosses the membrane as a helical span at residues 344-362; the sequence is FSITTMAISIPTGVKIFNW. The Cytoplasmic portion of the chain corresponds to 363–377; it reads LFTMYKGRISFTTPM. The chain crosses the membrane as a helical span at residues 378–397; it reads LWALAFIPNFVIGGVTGVML. Over 398 to 405 the chain is Extracellular; it reads AMAAADYQ. The chain crosses the membrane as a helical span at residues 406–425; it reads YHNTYFLVSHFHYVLIAGTV. H415 contributes to the heme a3 binding site. H417 contacts Fe(II)-heme a. Residues 426-452 are Cytoplasmic-facing; sequence FACFAGFIFWYPKMFGHKLNERIGKWF. The helical transmembrane segment at 453-472 threads the bilayer; the sequence is FWIFMIGFNICFFPQYFLGL. Residues 473 to 490 lie on the Extracellular side of the membrane; sequence QGMPRRIYTYGPNDGWTT. The chain crosses the membrane as a helical span at residues 491–510; it reads LNFISTVGAFMMGVGFLILC. Over 511–584 the chain is Cytoplasmic; that stretch reads YNIYYSFRYS…SKFKKIHMPS (74 aa). Residues 585–604 traverse the membrane as a helical segment; sequence NSGRPFFMSVAFGLAGFGLV. Residues 605-610 lie on the Extracellular side of the membrane; sequence FEWYWM. The chain crosses the membrane as a helical span at residues 611–631; the sequence is GVVGLIGVLLCMVLRSFEYDN. Over 632 to 649 the chain is Cytoplasmic; that stretch reads GYYISVDEIKETERKISE.

The protein belongs to the heme-copper respiratory oxidase family. Cu cation serves as cofactor. Ferriheme a is required as a cofactor. The cofactor is Heme A3..

The protein resides in the cell membrane. The catalysed reaction is 2 a quinol + O2 = 2 a quinone + 2 H2O. It participates in energy metabolism; oxidative phosphorylation. Functionally, catalyzes quinol oxidation with the concomitant reduction of oxygen to water. Major component for energy conversion during vegetative growth. In Bacillus subtilis (strain 168), this protein is Quinol oxidase subunit 1 (qoxB).